We begin with the raw amino-acid sequence, 289 residues long: Ribosomal RNA small subunit methyltransferase A (289 aa).

The S-adenosyl-L-methionine site is built by Asn-21, Leu-23, Gly-48, Glu-69, Asp-94, and Asn-120.

This sequence belongs to the class I-like SAM-binding methyltransferase superfamily. rRNA adenine N(6)-methyltransferase family. RsmA subfamily.

Its subcellular location is the cytoplasm. It carries out the reaction adenosine(1518)/adenosine(1519) in 16S rRNA + 4 S-adenosyl-L-methionine = N(6)-dimethyladenosine(1518)/N(6)-dimethyladenosine(1519) in 16S rRNA + 4 S-adenosyl-L-homocysteine + 4 H(+). In terms of biological role, specifically dimethylates two adjacent adenosines (A1518 and A1519) in the loop of a conserved hairpin near the 3'-end of 16S rRNA in the 30S particle. May play a critical role in biogenesis of 30S subunits. The chain is Ribosomal RNA small subunit methyltransferase A from Actinobacillus pleuropneumoniae serotype 5b (strain L20).